A 514-amino-acid chain; its full sequence is Efflux pump aflT (514 aa).

The next 10 helical transmembrane spans lie at 13–33 (ISGM…FCVA), 61–81 (SAYL…YALF), 85–105 (WVFL…GVAP), 116–136 (IAGV…AHIV), 146–166 (GLLG…GGAF), 174–194 (WCFY…LFLL), 218–238 (GTIV…WGGV), 247–267 (IIAL…IQVL), 289–309 (VFVF…PIWF), and 321–341 (GIDS…SGAV). N-linked (GlcNAc...) asparagine glycosylation is present at Asn343. Helical transmembrane passes span 351–371 (WFIV…LFTV), 378–398 (WIGF…QGAV), 411–431 (IGTA…TSVA), and 485–505 (LDVF…AVGI).

It belongs to the major facilitator superfamily. TCR/Tet family.

The protein resides in the cell membrane. Efflux pump; part of the gene cluster that mediates the biosynthesis of aflatoxins. The chain is Efflux pump aflT from Aspergillus parasiticus (strain ATCC 56775 / NRRL 5862 / SRRC 143 / SU-1).